A 729-amino-acid polypeptide reads, in one-letter code: Glycerophosphodiester phosphodiesterase GDPDL5 (729 aa).

A signal peptide spans 1–22 (MACPRVIFLILITFFILQTAFS). GP-PDE domains follow at residues 33–320 (PAVI…YRAI) and 337–645 (ITII…ARYR). N-linked (GlcNAc...) asparagine glycosylation is found at asparagine 88, asparagine 162, asparagine 218, asparagine 227, asparagine 285, asparagine 302, asparagine 390, asparagine 401, and asparagine 507. The chain crosses the membrane as a helical span at residues 709 to 729 (AIEVPFAFIAMAILVCFFISV).

It belongs to the glycerophosphoryl diester phosphodiesterase family. Expressed in stems, flowers and siliques.

The protein resides in the membrane. The catalysed reaction is a sn-glycero-3-phosphodiester + H2O = an alcohol + sn-glycerol 3-phosphate + H(+). This Arabidopsis thaliana (Mouse-ear cress) protein is Glycerophosphodiester phosphodiesterase GDPDL5.